The following is a 143-amino-acid chain: MSGDRDDPRYPYPKDDAELRRRLTPMQYEVTQHAATEPPFTGEYTDTEDAGIYHCVVCGTALFESGAKFHSGCGWPSYFKPIDGEVIDEKMDYTHGMTRVEVRCNQCGAHLGHVFEDGPRDKTGLRYCINSAALNFEAKPERK.

The region spanning 16 to 139 (DAELRRRLTP…NSAALNFEAK (124 aa)) is the MsrB domain. 4 residues coordinate Zn(2+): C55, C58, C104, and C107. C128 (nucleophile) is an active-site residue.

It belongs to the MsrB Met sulfoxide reductase family. The cofactor is Zn(2+).

It catalyses the reaction L-methionyl-[protein] + [thioredoxin]-disulfide + H2O = L-methionyl-(R)-S-oxide-[protein] + [thioredoxin]-dithiol. This is Peptide methionine sulfoxide reductase MsrB from Burkholderia mallei (strain NCTC 10229).